A 594-amino-acid polypeptide reads, in one-letter code: Putative diflavin flavoprotein A 4 (594 aa).

Residues 57–250 (RRGTTSNSYL…LTLKMIAPGH (194 aa)) are zinc metallo-hydrolase. The Flavodoxin-like domain maps to 279 to 417 (VALIYASAYG…VCTTSGANFA (139 aa)). The tract at residues 445-594 (VGRIIGSIGV…IRHRKSGGQY (150 aa)) is flavodoxin-reductase-like.

In the N-terminal section; belongs to the zinc metallo-hydrolase group 3 family. The protein in the C-terminal section; belongs to the flavodoxin reductase family. Fe cation serves as cofactor.

Functionally, mediates electron transfer from NADH to oxygen, reducing it to water. This modular protein has 3 redox cofactors, in other organisms the same activity requires 2 or 3 proteins. This is Putative diflavin flavoprotein A 4 (dfa4) from Synechocystis sp. (strain ATCC 27184 / PCC 6803 / Kazusa).